The sequence spans 136 residues: Translation initiation factor 5A (136 aa).

K37 carries the post-translational modification Hypusine.

Belongs to the eIF-5A family.

The protein resides in the cytoplasm. In terms of biological role, functions by promoting the formation of the first peptide bond. The sequence is that of Translation initiation factor 5A (eIF5A) from Thermococcus gammatolerans (strain DSM 15229 / JCM 11827 / EJ3).